The chain runs to 71 residues: UPF0346 protein BCB4264_A2283 (71 aa).

This sequence belongs to the UPF0346 family.

The sequence is that of UPF0346 protein BCB4264_A2283 from Bacillus cereus (strain B4264).